Reading from the N-terminus, the 56-residue chain is Large ribosomal subunit protein bL32 (56 aa).

The segment at 1–37 (MAVQQNKKSRSRRDMRRSHDALTTAAISVDKASGEKH) is disordered. Positions 7 to 16 (KKSRSRRDMR) are enriched in basic residues.

It belongs to the bacterial ribosomal protein bL32 family.

This Pasteurella multocida (strain Pm70) protein is Large ribosomal subunit protein bL32 (rpmF).